The chain runs to 204 residues: 8-oxoguanine DNA glycosylase/AP lyase (204 aa).

Active-site residues include lysine 129 and aspartate 147.

The protein belongs to the type-2 OGG1 family.

It carries out the reaction 2'-deoxyribonucleotide-(2'-deoxyribose 5'-phosphate)-2'-deoxyribonucleotide-DNA = a 3'-end 2'-deoxyribonucleotide-(2,3-dehydro-2,3-deoxyribose 5'-phosphate)-DNA + a 5'-end 5'-phospho-2'-deoxyribonucleoside-DNA + H(+). In terms of biological role, catalyzes the excision of an oxidatively damaged form of guanine (7,8-dihydro-8-oxoguanine = 8-oxoG) from DNA. Also cleaves the DNA backbone at apurinic/apyrimidinic sites (AP sites). This Thermoplasma acidophilum (strain ATCC 25905 / DSM 1728 / JCM 9062 / NBRC 15155 / AMRC-C165) protein is 8-oxoguanine DNA glycosylase/AP lyase.